Consider the following 347-residue polypeptide: Dihydroorotate dehydrogenase (quinone) (347 aa).

FMN is bound by residues alanine 65–lysine 69 and threonine 89. Lysine 69 serves as a coordination point for substrate. Asparagine 114–phenylalanine 118 is a substrate binding site. Asparagine 146 and asparagine 179 together coordinate FMN. Asparagine 179 provides a ligand contact to substrate. Catalysis depends on serine 182, which acts as the Nucleophile. Asparagine 184 lines the substrate pocket. 2 residues coordinate FMN: lysine 224 and threonine 252. Position 253-254 (asparagine 253–threonine 254) interacts with substrate. Residues glycine 275, glycine 304, and tyrosine 325–threonine 326 each bind FMN.

The protein belongs to the dihydroorotate dehydrogenase family. Type 2 subfamily. As to quaternary structure, monomer. FMN is required as a cofactor.

The protein resides in the cell membrane. The catalysed reaction is (S)-dihydroorotate + a quinone = orotate + a quinol. The protein operates within pyrimidine metabolism; UMP biosynthesis via de novo pathway; orotate from (S)-dihydroorotate (quinone route): step 1/1. Functionally, catalyzes the conversion of dihydroorotate to orotate with quinone as electron acceptor. The protein is Dihydroorotate dehydrogenase (quinone) of Herminiimonas arsenicoxydans.